A 196-amino-acid polypeptide reads, in one-letter code: DnaA initiator-associating protein DiaA (196 aa).

The SIS domain maps to 34–196; the sequence is LVQSLLNGNK…DNTLFPHQDD (163 aa).

This sequence belongs to the SIS family. DiaA subfamily. As to quaternary structure, homotetramer; dimer of dimers.

Functionally, required for the timely initiation of chromosomal replication via direct interactions with the DnaA initiator protein. The protein is DnaA initiator-associating protein DiaA of Klebsiella pneumoniae (strain 342).